We begin with the raw amino-acid sequence, 91 residues long: Potassium channel toxin MeuTXK-beta-2 (91 aa).

Positions M1–C19 are cleaved as a signal peptide. In terms of domain architecture, BetaSPN-type CS-alpha/beta spans Q54 to F91. Disulfide bonds link C57–C78, C64–C83, and C68–C85.

Belongs to the long chain scorpion toxin family. Class 1 subfamily. Expressed by the venom gland.

It is found in the secreted. Has a low affinity binding to potassium channels of rat brain synaptosomes. Displays weak antibacterial activity against Stenotrophomonas sp. Strongly inhibits the development of the Plasmodium berghei ookinetes. Displays slight hemolytic effect on mouse erythrocytes. Induces cytolysis on Xenopus oocytes at high concentrations. Is not toxic towards mice and towards the insect Tenebrio molitor. The protein is Potassium channel toxin MeuTXK-beta-2 of Mesobuthus eupeus (Lesser Asian scorpion).